A 449-amino-acid polypeptide reads, in one-letter code: Glucose-6-phosphate isomerase (449 aa).

Catalysis depends on glutamate 290, which acts as the Proton donor. Active-site residues include histidine 311 and lysine 425.

Belongs to the GPI family.

It localises to the cytoplasm. The catalysed reaction is alpha-D-glucose 6-phosphate = beta-D-fructose 6-phosphate. It functions in the pathway carbohydrate biosynthesis; gluconeogenesis. It participates in carbohydrate degradation; glycolysis; D-glyceraldehyde 3-phosphate and glycerone phosphate from D-glucose: step 2/4. Its function is as follows. Catalyzes the reversible isomerization of glucose-6-phosphate to fructose-6-phosphate. This is Glucose-6-phosphate isomerase from Clostridioides difficile (strain 630) (Peptoclostridium difficile).